The primary structure comprises 587 residues: Thiol:disulfide interchange protein DsbD 2 (587 aa).

Residues 1 to 18 form the signal peptide; the sequence is MRVLILLLMLLLPGLSQA. The Periplasmic portion of the chain corresponds to 19 to 172; that stretch reads QPGDDLFAPR…SLQAGNLAWS (154 aa). Cystine bridges form between Cys124–Cys130 and Cys188–Cys308. A helical membrane pass occupies residues 173–193; sequence LLLFFGLGLLLAFAPCSLPML. Residues 194-216 are Cytoplasmic-facing; that stretch reads PILAGLVVGSGAGPRRGLLLAGS. The chain crosses the membrane as a helical span at residues 217–237; sequence YVLSMALVYAGLGVVAALLGG. The Periplasmic portion of the chain corresponds to 238 to 246; the sequence is NLQAWLQQP. A helical transmembrane segment spans residues 247-267; the sequence is WLLGSFAALFVFLALPMFGFF. Residues 268–299 are Cytoplasmic-facing; it reads ELQLPAALRDRLDGLSRGRKGGSLAGAAALGA. A helical membrane pass occupies residues 300 to 320; sequence LSGLLVGPCMTAPLAGALLYI. Topologically, residues 321-330 are periplasmic; sequence AQTGNALHGG. A helical membrane pass occupies residues 331–351; it reads LVLFSLGLGIGMPLLLLVTVG. Residues 352–360 lie on the Cytoplasmic side of the membrane; the sequence is SRFLPKPGP. Residues 361–381 form a helical membrane-spanning segment; it reads WMNLVKGVFGFLFLGTAWILL. The Periplasmic portion of the chain corresponds to 382–383; the sequence is RP. The chain crosses the membrane as a helical span at residues 384 to 404; the sequence is LLGEALWIGLGGALLLVLAYA. Residues 405–416 lie on the Cytoplasmic side of the membrane; that stretch reads ALHTARGLARHA. The chain crosses the membrane as a helical span at residues 417 to 437; sequence VLFGAAGCIFGLWGAAMLLGA. Residues 438–587 lie on the Periplasmic side of the membrane; that stretch reads AAGADDPWRP…AHWQATRERG (150 aa). Positions 448 to 585 constitute a Thioredoxin domain; it reads LQVYAAANRG…FLAHWQATRE (138 aa). Cys500 and Cys503 are oxidised to a cystine.

It belongs to the thioredoxin family. DsbD subfamily.

The protein localises to the cell inner membrane. It carries out the reaction [protein]-dithiol + NAD(+) = [protein]-disulfide + NADH + H(+). The enzyme catalyses [protein]-dithiol + NADP(+) = [protein]-disulfide + NADPH + H(+). Its function is as follows. Required to facilitate the formation of correct disulfide bonds in some periplasmic proteins and for the assembly of the periplasmic c-type cytochromes. Acts by transferring electrons from cytoplasmic thioredoxin to the periplasm. This transfer involves a cascade of disulfide bond formation and reduction steps. The sequence is that of Thiol:disulfide interchange protein DsbD 2 from Pseudomonas aeruginosa (strain ATCC 15692 / DSM 22644 / CIP 104116 / JCM 14847 / LMG 12228 / 1C / PRS 101 / PAO1).